The sequence spans 156 residues: Transcriptional regulator MraZ (156 aa).

SpoVT-AbrB domains follow at residues 7–54 (NIEV…PESV) and 84–127 (VEVV…AKER).

Belongs to the MraZ family. Forms oligomers.

Its subcellular location is the cytoplasm. The protein localises to the nucleoid. This is Transcriptional regulator MraZ from Bacteroides thetaiotaomicron (strain ATCC 29148 / DSM 2079 / JCM 5827 / CCUG 10774 / NCTC 10582 / VPI-5482 / E50).